The primary structure comprises 107 residues: Toluene 1,2-dioxygenase system ferredoxin subunit (107 aa).

Residues 4-99 (TYILRQGDLP…IKVEGDEVHV (96 aa)) form the Rieske domain. C43, H45, C62, and H65 together coordinate [2Fe-2S] cluster.

The protein belongs to the bacterial ring-hydroxylating dioxygenase ferredoxin component family. In terms of assembly, this dioxygenase system consists of four proteins: the two subunits of the hydroxylase component (todC1 and todC2), a ferredoxin (TodB) and a ferredoxin reductase (TodA).

Its pathway is xenobiotic degradation; toluene degradation. Functionally, this protein seems to be a 2Fe-2S ferredoxin. The sequence is that of Toluene 1,2-dioxygenase system ferredoxin subunit (todB) from Pseudomonas putida (strain ATCC 700007 / DSM 6899 / JCM 31910 / BCRC 17059 / LMG 24140 / F1).